Reading from the N-terminus, the 682-residue chain is Potassium-transporting ATPase ATP-binding subunit (682 aa).

The next 4 helical transmembrane spans lie at 34-54 (PVMF…IAMA), 62-82 (ALFS…ANFA), 219-239 (IALT…TATL), and 254-274 (VLVA…LSAI). Residue D307 is the 4-aspartylphosphate intermediate of the active site. ATP-binding positions include D344, E348, 377–384 (FTAQSRMS), and K395. Residues D518 and D522 each contribute to the Mg(2+) site. 3 consecutive transmembrane segments (helical) span residues 588-608 (FAII…LNIM), 616-636 (AILS…PLAL), and 656-676 (IYGL…DLLL).

This sequence belongs to the cation transport ATPase (P-type) (TC 3.A.3) family. Type IA subfamily. As to quaternary structure, the system is composed of three essential subunits: KdpA, KdpB and KdpC.

It localises to the cell inner membrane. The enzyme catalyses K(+)(out) + ATP + H2O = K(+)(in) + ADP + phosphate + H(+). In terms of biological role, part of the high-affinity ATP-driven potassium transport (or Kdp) system, which catalyzes the hydrolysis of ATP coupled with the electrogenic transport of potassium into the cytoplasm. This subunit is responsible for energy coupling to the transport system and for the release of the potassium ions to the cytoplasm. In Escherichia coli O8 (strain IAI1), this protein is Potassium-transporting ATPase ATP-binding subunit.